The primary structure comprises 163 residues: Putative ribose 5-phosphate isomerase (163 aa).

Residue D16–D17 participates in D-ribulose 5-phosphate binding. C76 (proton acceptor) is an active-site residue. D-ribulose 5-phosphate contacts are provided by residues G77 to G81, N110, R120, and K148.

Belongs to the LacAB/RpiB family. Homodimer or homotetramer.

This is Putative ribose 5-phosphate isomerase from Coccidioides immitis (strain RS) (Valley fever fungus).